The sequence spans 445 residues: tRNA-2-methylthio-N(6)-dimethylallyladenosine synthase (445 aa).

An MTTase N-terminal domain is found at 3-124 (KNLYIKTYGC…LPELISKIVR (122 aa)). [4Fe-4S] cluster is bound by residues cysteine 12, cysteine 48, cysteine 87, cysteine 162, cysteine 166, and cysteine 169. The region spanning 148-380 (YPQGASSFIS…QKELMDQQLA (233 aa)) is the Radical SAM core domain. In terms of domain architecture, TRAM spans 383–445 (ESCVGSTIKV…SLNSLTGEIL (63 aa)).

Belongs to the methylthiotransferase family. MiaB subfamily. Monomer. Requires [4Fe-4S] cluster as cofactor.

It is found in the cytoplasm. It catalyses the reaction N(6)-dimethylallyladenosine(37) in tRNA + (sulfur carrier)-SH + AH2 + 2 S-adenosyl-L-methionine = 2-methylsulfanyl-N(6)-dimethylallyladenosine(37) in tRNA + (sulfur carrier)-H + 5'-deoxyadenosine + L-methionine + A + S-adenosyl-L-homocysteine + 2 H(+). Catalyzes the methylthiolation of N6-(dimethylallyl)adenosine (i(6)A), leading to the formation of 2-methylthio-N6-(dimethylallyl)adenosine (ms(2)i(6)A) at position 37 in tRNAs that read codons beginning with uridine. This chain is tRNA-2-methylthio-N(6)-dimethylallyladenosine synthase, found in Rickettsia akari (strain Hartford).